A 245-amino-acid chain; its full sequence is 2,3-bisphosphoglycerate-dependent phosphoglycerate mutase (245 aa).

Substrate contacts are provided by residues 8-15 (RHGQSLWN), 21-22 (TG), Arg60, 87-90 (ERHY), Lys98, 114-115 (RR), and 183-184 (GN). The Tele-phosphohistidine intermediate role is filled by His9. Glu87 acts as the Proton donor/acceptor in catalysis.

Belongs to the phosphoglycerate mutase family. BPG-dependent PGAM subfamily.

It carries out the reaction (2R)-2-phosphoglycerate = (2R)-3-phosphoglycerate. The protein operates within carbohydrate degradation; glycolysis; pyruvate from D-glyceraldehyde 3-phosphate: step 3/5. Functionally, catalyzes the interconversion of 2-phosphoglycerate and 3-phosphoglycerate. The polypeptide is 2,3-bisphosphoglycerate-dependent phosphoglycerate mutase (Bacillus cytotoxicus (strain DSM 22905 / CIP 110041 / 391-98 / NVH 391-98)).